The sequence spans 930 residues: Protein translocase subunit SecA (930 aa).

ATP contacts are provided by residues Q83, 101–105 (GEGKT), and D491.

It belongs to the SecA family. As to quaternary structure, monomer and homodimer. Part of the essential Sec protein translocation apparatus which comprises SecA, SecYEG and auxiliary proteins SecDF. Other proteins may also be involved.

It is found in the cell inner membrane. The protein localises to the cellular thylakoid membrane. The protein resides in the cytoplasm. The catalysed reaction is ATP + H2O + cellular proteinSide 1 = ADP + phosphate + cellular proteinSide 2.. In terms of biological role, part of the Sec protein translocase complex. Interacts with the SecYEG preprotein conducting channel. Has a central role in coupling the hydrolysis of ATP to the transfer of proteins into and across the cell membrane, serving as an ATP-driven molecular motor driving the stepwise translocation of polypeptide chains across the membrane. Probably participates in protein translocation into and across both the cytoplasmic and thylakoid membranes in cyanobacterial cells. The sequence is that of Protein translocase subunit SecA from Trichormus variabilis (strain ATCC 29413 / PCC 7937) (Anabaena variabilis).